The sequence spans 407 residues: Phenazine 1,6-dicarboxylic acid hydroxylase PhzS (407 aa).

Positions 17, 134, and 313 each coordinate FAD.

FAD serves as cofactor.

It carries out the reaction phenazine-1,6-dicarboxylate + NADH + O2 + 2 H(+) = 6-hydroxyphenazine-1-carboxylate + CO2 + NAD(+) + H2O. The catalysed reaction is 6-hydroxyphenazine-1-carboxylate + NADH + O2 + 2 H(+) = 1,6-dihydroxyphenazine + CO2 + NAD(+) + H2O. It catalyses the reaction phenazine-1-carboxylate + NADH + O2 + 2 H(+) = 1-hydroxyphenazine + CO2 + NAD(+) + H2O. In terms of biological role, involved in the biosynthesis of phenazine natural products including myxin, an N(5),N(10)-dioxide phenazine antiobiotic, which has antimicrobial activity. Catalyzes the decarboxylative hydroxylations of phenazine 1,6-dicarboxylic acid (PDC) to produce 1,6-dihydroxyphenazine (DHP). Low activity with phenazine 1-carboxylic acid (PCA) to produce 1-hydroxyphenazine. The chain is Phenazine 1,6-dicarboxylic acid hydroxylase PhzS from Lysobacter antibioticus.